Here is a 184-residue protein sequence, read N- to C-terminus: Inactive cytochrome P450 monooxygenase lolP2 (184 aa).

A helical membrane pass occupies residues Gly-10 to Leu-30. The tract at residues Arg-161 to Pro-184 is disordered. The segment covering Thr-163–Pro-172 has biased composition (basic residues). Residues Arg-173–Pro-184 show a composition bias toward low complexity.

Belongs to the cytochrome P450 family.

It is found in the membrane. Cytochrome P450 monooxygenase; part of the gene cluster that mediates the biosynthesis of loline alkaloids, potent insecticidal agents composed of a pyrrolizidine ring system and an uncommon ether bridge linking carbons 2 and 7. Lolines are structurally differentiated by the various modifications of the L-amino group and include norloline, loline, N-methylloline, N-acetylloline, N-acetylnorloline, and N-formylloline. The first committed step is the condensation of O-acetyl-L-homoserine (derived from L-aspartic acid) and L-proline, probably catalyzed by the gamma-type pyridoxal 5'-phosphate(PLP)-dependent enzyme lolC, to give the diamino diacid, NACPP. Ensuing cyclization, decarboxylation, and acetylation steps yield 1-exo-acetamidopyrrolizidine (AcAP). LolO is required for installation of the ether bridge upon the pathway intermediate, 1-exo-acetamidopyrrolizidine (AcAP). In sequential 2-oxoglutarate- and O(2)-consuming steps, lolO removes hydrogens from C2 and C7 of AcAP to form both carbon-oxygen bonds in N-acetylnorloline (NANL), the precursor to all other lolines. The enzymes lolD, lolE, lolF and lolT have also been proposed to be involved in the ether-bridge installation. Further processing of the exocyclic moiety of NANL by fungal N-acetamidase (LolN), methyltransferase (LolM), and cytochrome P450 (LolP) enzymes, with occasional involvement of a plant acetyltransferase, generates the other known lolines. LolN transforms NANL to norlonine which is monomethylated and dimethylated to respectively lonine and N-methyllonine (NML) by lolM. LolP catalyzes hydroxylation of the methyl group in N-methylloline (NML) and further oxygenation to N-formylloline (NFL). A plant acetyltransferase is responsible for the acetylation of loline to form N-acetylloline (NAL). LolA might interact with aspartate kinase to prevent feedback inhibition of its activity by these end products and thereby promote production of L-homoserine from L-aspartate. This Epichloe uncinata (Endophyte fungus) protein is Inactive cytochrome P450 monooxygenase lolP2.